A 126-amino-acid chain; its full sequence is Aspartate 1-decarboxylase (126 aa).

The active-site Schiff-base intermediate with substrate; via pyruvic acid is serine 25. Serine 25 carries the pyruvic acid (Ser) modification. Threonine 57 serves as a coordination point for substrate. Tyrosine 58 functions as the Proton donor in the catalytic mechanism. 73–75 (GGA) is a substrate binding site.

This sequence belongs to the PanD family. In terms of assembly, heterooctamer of four alpha and four beta subunits. Pyruvate is required as a cofactor. In terms of processing, is synthesized initially as an inactive proenzyme, which is activated by self-cleavage at a specific serine bond to produce a beta-subunit with a hydroxyl group at its C-terminus and an alpha-subunit with a pyruvoyl group at its N-terminus.

The protein resides in the cytoplasm. The catalysed reaction is L-aspartate + H(+) = beta-alanine + CO2. It participates in cofactor biosynthesis; (R)-pantothenate biosynthesis; beta-alanine from L-aspartate: step 1/1. Catalyzes the pyruvoyl-dependent decarboxylation of aspartate to produce beta-alanine. The protein is Aspartate 1-decarboxylase of Xanthomonas oryzae pv. oryzae (strain MAFF 311018).